Reading from the N-terminus, the 191-residue chain is Pyridoxal 5'-phosphate synthase subunit PdxT (191 aa).

Residue G48 to S50 participates in L-glutamine binding. Catalysis depends on C81, which acts as the Nucleophile. L-glutamine is bound by residues R109 and I136 to R137. Residues H172 and E174 each act as charge relay system in the active site.

This sequence belongs to the glutaminase PdxT/SNO family. In terms of assembly, in the presence of PdxS, forms a dodecamer of heterodimers. Only shows activity in the heterodimer.

The catalysed reaction is aldehydo-D-ribose 5-phosphate + D-glyceraldehyde 3-phosphate + L-glutamine = pyridoxal 5'-phosphate + L-glutamate + phosphate + 3 H2O + H(+). It catalyses the reaction L-glutamine + H2O = L-glutamate + NH4(+). It participates in cofactor biosynthesis; pyridoxal 5'-phosphate biosynthesis. Functionally, catalyzes the hydrolysis of glutamine to glutamate and ammonia as part of the biosynthesis of pyridoxal 5'-phosphate. The resulting ammonia molecule is channeled to the active site of PdxS. In Thermus thermophilus (strain ATCC BAA-163 / DSM 7039 / HB27), this protein is Pyridoxal 5'-phosphate synthase subunit PdxT.